Reading from the N-terminus, the 114-residue chain is MTRVKRGNVSRKRHKKVLNLTKGFRGAASLLFRTANQQNMKALRYSYANRRKKKRNFRRLWITRVNAAIRAYGFNYSEFLYVLKNSNILLNRKILAQLAICDPDTFFKFIMSIQ.

The protein belongs to the bacterial ribosomal protein bL20 family.

It is found in the plastid. The protein resides in the chloroplast. Binds directly to 23S ribosomal RNA and is necessary for the in vitro assembly process of the 50S ribosomal subunit. It is not involved in the protein synthesizing functions of that subunit. In Tetradesmus obliquus (Green alga), this protein is Large ribosomal subunit protein bL20c.